Here is an 85-residue protein sequence, read N- to C-terminus: uncharacterized protein (85 aa).

The tract at residues Ser35 to Ile85 is disordered.

This is an uncharacterized protein from Pasteurella multocida (strain Pm70).